The chain runs to 221 residues: MSDENLLTTLDTYLASGIHIGTQQKTEDMRRFIYRVRADGLYVLDVRKTDERLRLAAKFLSNYEPEDIMAVTRRVYSVGPLKKFGQVTGINTVAGRFVPGTLTNPSAKKFAEPEVLFLSDPRVDKQALKEAIEIGIPVVGMCDTEHLTAHIDFIIPTNNKGRKSVSLMYYLIAREYMKNRGLIGEEVPFSYDDFLEKAMNVKVKMNTAPRQRGRFQRRPRR.

It belongs to the universal ribosomal protein uS2 family.

This chain is Small ribosomal subunit protein uS2, found in Methanococcus maripaludis (strain C6 / ATCC BAA-1332).